The sequence spans 205 residues: Holliday junction resolvase RecU (205 aa).

Mg(2+) contacts are provided by Thr-83, Asp-85, Glu-98, and Gln-117.

It belongs to the RecU family. The cofactor is Mg(2+).

The protein localises to the cytoplasm. It carries out the reaction Endonucleolytic cleavage at a junction such as a reciprocal single-stranded crossover between two homologous DNA duplexes (Holliday junction).. Endonuclease that resolves Holliday junction intermediates in genetic recombination. Cleaves mobile four-strand junctions by introducing symmetrical nicks in paired strands. Promotes annealing of linear ssDNA with homologous dsDNA. Required for DNA repair, homologous recombination and chromosome segregation. This Streptococcus suis (strain 98HAH33) protein is Holliday junction resolvase RecU.